The following is a 471-amino-acid chain: ATP synthase subunit beta (471 aa).

Residue 156–163 (GGAGVGKT) coordinates ATP.

The protein belongs to the ATPase alpha/beta chains family. In terms of assembly, F-type ATPases have 2 components, CF(1) - the catalytic core - and CF(0) - the membrane proton channel. CF(1) has five subunits: alpha(3), beta(3), gamma(1), delta(1), epsilon(1). CF(0) has three main subunits: a(1), b(2) and c(9-12). The alpha and beta chains form an alternating ring which encloses part of the gamma chain. CF(1) is attached to CF(0) by a central stalk formed by the gamma and epsilon chains, while a peripheral stalk is formed by the delta and b chains.

Its subcellular location is the cell membrane. The enzyme catalyses ATP + H2O + 4 H(+)(in) = ADP + phosphate + 5 H(+)(out). Its function is as follows. Produces ATP from ADP in the presence of a proton gradient across the membrane. The catalytic sites are hosted primarily by the beta subunits. The chain is ATP synthase subunit beta from Lawsonia intracellularis (strain PHE/MN1-00).